The following is a 374-amino-acid chain: tRNA-specific 2-thiouridylase MnmA (374 aa).

ATP is bound by residues 17–24 (GMSGGVDS) and methionine 43. Positions 103-105 (NPD) are interaction with target base in tRNA. Catalysis depends on cysteine 108, which acts as the Nucleophile. A disulfide bond links cysteine 108 and cysteine 204. Glycine 132 serves as a coordination point for ATP. Residues 154 to 156 (KDQ) form an interaction with tRNA region. The Cysteine persulfide intermediate role is filled by cysteine 204. Residues 316–317 (RY) form an interaction with tRNA region.

The protein belongs to the MnmA/TRMU family.

The protein localises to the cytoplasm. The enzyme catalyses S-sulfanyl-L-cysteinyl-[protein] + uridine(34) in tRNA + AH2 + ATP = 2-thiouridine(34) in tRNA + L-cysteinyl-[protein] + A + AMP + diphosphate + H(+). In terms of biological role, catalyzes the 2-thiolation of uridine at the wobble position (U34) of tRNA, leading to the formation of s(2)U34. This chain is tRNA-specific 2-thiouridylase MnmA, found in Pseudomonas fluorescens (strain Pf0-1).